We begin with the raw amino-acid sequence, 346 residues long: tRNA/tmRNA (uracil-C(5))-methyltransferase (346 aa).

S-adenosyl-L-methionine contacts are provided by Gln168, Tyr197, Asn202, Glu218, and Asp278. The Nucleophile role is filled by Cys303. Glu337 (proton acceptor) is an active-site residue.

The protein belongs to the class I-like SAM-binding methyltransferase superfamily. RNA M5U methyltransferase family. TrmA subfamily.

The enzyme catalyses uridine(54) in tRNA + S-adenosyl-L-methionine = 5-methyluridine(54) in tRNA + S-adenosyl-L-homocysteine + H(+). It carries out the reaction uridine(341) in tmRNA + S-adenosyl-L-methionine = 5-methyluridine(341) in tmRNA + S-adenosyl-L-homocysteine + H(+). Dual-specificity methyltransferase that catalyzes the formation of 5-methyluridine at position 54 (m5U54) in all tRNAs, and that of position 341 (m5U341) in tmRNA (transfer-mRNA). This Campylobacter lari (strain RM2100 / D67 / ATCC BAA-1060) protein is tRNA/tmRNA (uracil-C(5))-methyltransferase.